Reading from the N-terminus, the 458-residue chain is uncharacterized protein (458 aa).

A compositionally biased stretch (basic and acidic residues) spans 1-10 (MQAEPKKSQA). Residues 1–20 (MQAEPKKSQAEQRAVAEPVS) are disordered. The TRAM domain occupies 23–84 (VSLVGEEYEV…ARFLRADAVE (62 aa)). Residues cysteine 97, cysteine 105, cysteine 108, and cysteine 193 each coordinate [4Fe-4S] cluster. Positions 287, 316, 340, and 384 each coordinate S-adenosyl-L-methionine. Cysteine 411 (nucleophile) is an active-site residue.

It belongs to the class I-like SAM-binding methyltransferase superfamily. RNA M5U methyltransferase family.

This is an uncharacterized protein from Streptomyces coelicolor (strain ATCC BAA-471 / A3(2) / M145).